The sequence spans 234 residues: Probable pectate lyase F (234 aa).

The N-terminal stretch at 1 to 17 (MRSTAAVLSILLPGALA) is a signal peptide. An N-linked (GlcNAc...) asparagine glycan is attached at Asn168.

Belongs to the polysaccharide lyase 3 family. It depends on Ca(2+) as a cofactor.

It localises to the secreted. It catalyses the reaction Eliminative cleavage of (1-&gt;4)-alpha-D-galacturonan to give oligosaccharides with 4-deoxy-alpha-D-galact-4-enuronosyl groups at their non-reducing ends.. Pectinolytic enzyme consist of four classes of enzymes: pectin lyase, polygalacturonase, pectin methylesterase and rhamnogalacturonase. Among pectinolytic enzymes, pectin lyase is the most important in depolymerization of pectin, since it cleaves internal glycosidic bonds of highly methylated pectins. Favors pectate, the anion, over pectin, the methyl ester. In Aspergillus terreus (strain NIH 2624 / FGSC A1156), this protein is Probable pectate lyase F (plyF).